We begin with the raw amino-acid sequence, 88 residues long: MPKRVLQGVVVSDKTDKTIVVKVERRFTHPVMKKTVRRSKNYHAHDEANAAKIGQTVFIEESRPYSKTKTWKLVEDQAAAAEAAGTAA.

It belongs to the universal ribosomal protein uS17 family. In terms of assembly, part of the 30S ribosomal subunit.

In terms of biological role, one of the primary rRNA binding proteins, it binds specifically to the 5'-end of 16S ribosomal RNA. This is Small ribosomal subunit protein uS17 from Methylorubrum extorquens (strain PA1) (Methylobacterium extorquens).